The sequence spans 330 residues: Phosphate acyltransferase (330 aa).

Belongs to the PlsX family. In terms of assembly, homodimer. Probably interacts with PlsY.

The protein resides in the cytoplasm. It catalyses the reaction a fatty acyl-[ACP] + phosphate = an acyl phosphate + holo-[ACP]. Its pathway is lipid metabolism; phospholipid metabolism. Catalyzes the reversible formation of acyl-phosphate (acyl-PO(4)) from acyl-[acyl-carrier-protein] (acyl-ACP). This enzyme utilizes acyl-ACP as fatty acyl donor, but not acyl-CoA. The polypeptide is Phosphate acyltransferase (Bacillus thuringiensis (strain Al Hakam)).